Here is a 400-residue protein sequence, read N- to C-terminus: Transposase for insertion sequence element ISRM3 (400 aa).

Belongs to the transposase mutator family.

Required for the transposition of the insertion element. The protein is Transposase for insertion sequence element ISRM3 of Rhizobium meliloti (strain 1021) (Ensifer meliloti).